The chain runs to 291 residues: Protease HtpX homolog (291 aa).

The next 2 helical transmembrane spans lie at 11-31 (INTF…GLLA) and 34-54 (FLGM…ACVQ). Histidine 140 lines the Zn(2+) pocket. Glutamate 141 is a catalytic residue. Zn(2+) is bound at residue histidine 144. The next 2 helical transmembrane spans lie at 155-175 (IVFG…RALI) and 186-206 (AFSF…AMLV). Glutamate 215 serves as a coordination point for Zn(2+).

The protein belongs to the peptidase M48B family. It depends on Zn(2+) as a cofactor.

It is found in the cell membrane. This chain is Protease HtpX homolog, found in Tropheryma whipplei (strain TW08/27) (Whipple's bacillus).